The chain runs to 99 residues: Protein MOST-1 (99 aa).

Interacts with TSPO, IGHM and IGHD. As to expression, expressed in the heart, kidney, liver, pancreas, small intestine, ovary, testis, prostate and thymus. Expressed in all of the cancer cell lines tested.

It is found in the cytoplasm. Its subcellular location is the microsome membrane. The protein localises to the endoplasmic reticulum membrane. May be involved in cell survival, proliferation and progression of cancer cells. The protein is Protein MOST-1 (C8orf17) of Homo sapiens (Human).